A 252-amino-acid polypeptide reads, in one-letter code: Protein AGAMOUS-LIKE 6 (252 aa).

Residues 1–61 enclose the MADS-box domain; it reads MGRGRVELKR…GKLYEFGSAG (61 aa). Short sequence motifs (nuclear localization signal) lie at residues 8–15 and 138–145; these read LKRIENKI and QRKTQIMM. Residues 85 to 175 enclose the K-box domain; the sequence is TQSWYQEVSK…KIKVSLELSS (91 aa).

As to expression, restricted to flowers.

It localises to the nucleus. Probable transcription factor involved in fruit development. Key regulator of the transition between the state of 'ovary arrest' imposed towards anthesis and the fertilization-triggered fruit set. This Solanum lycopersicum (Tomato) protein is Protein AGAMOUS-LIKE 6.